A 510-amino-acid chain; its full sequence is NAD(P)H-quinone oxidoreductase subunit 2 B, chloroplastic (510 aa).

The next 13 membrane-spanning stretches (helical) occupy residues 24 to 44 (LLLF…GLIL), 59 to 79 (WFYF…LFRW), 99 to 119 (IFQF…VEYI), 124 to 144 (MAIT…MFLC), 150 to 170 (ITIF…SGYT), 184 to 204 (LLMG…LYGL), 229 to 249 (ISIA…LAPF), 295 to 315 (WHLL…LIAI), 323 to 343 (MLAY…IVGD), 354 to 374 (YMLF…LFGL), 395 to 415 (ALSL…AGFF), 418 to 438 (LHLF…IGLL), and 484 to 504 (MIVC…ILAI).

It belongs to the complex I subunit 2 family. NDH is composed of at least 16 different subunits, 5 of which are encoded in the nucleus.

It is found in the plastid. The protein resides in the chloroplast thylakoid membrane. The catalysed reaction is a plastoquinone + NADH + (n+1) H(+)(in) = a plastoquinol + NAD(+) + n H(+)(out). It carries out the reaction a plastoquinone + NADPH + (n+1) H(+)(in) = a plastoquinol + NADP(+) + n H(+)(out). NDH shuttles electrons from NAD(P)H:plastoquinone, via FMN and iron-sulfur (Fe-S) centers, to quinones in the photosynthetic chain and possibly in a chloroplast respiratory chain. The immediate electron acceptor for the enzyme in this species is believed to be plastoquinone. Couples the redox reaction to proton translocation, and thus conserves the redox energy in a proton gradient. The protein is NAD(P)H-quinone oxidoreductase subunit 2 B, chloroplastic of Acorus calamus (Sweet flag).